The chain runs to 185 residues: Large ribosomal subunit protein uL6 (185 aa).

It belongs to the universal ribosomal protein uL6 family. In terms of assembly, part of the 50S ribosomal subunit.

This protein binds to the 23S rRNA, and is important in its secondary structure. It is located near the subunit interface in the base of the L7/L12 stalk, and near the tRNA binding site of the peptidyltransferase center. This chain is Large ribosomal subunit protein uL6, found in Deinococcus deserti (strain DSM 17065 / CIP 109153 / LMG 22923 / VCD115).